Here is a 359-residue protein sequence, read N- to C-terminus: 4-galactosyl-N-acetylglucosaminide 3-alpha-L-fucosyltransferase FUT6 (359 aa).

The Cytoplasmic segment spans residues 1 to 14 (MDPLGPAKTQWSWR). The chain crosses the membrane as a helical; Signal-anchor for type II membrane protein span at residues 15-34 (CCLTALLFQLLVAVCFFSYL). Topologically, residues 35 to 359 (RVSRDDPTVY…QTRSIAAWFT (325 aa)) are lumenal. The segment at 73–112 (KPIALPRCSEMVPGTADCNITADRKVYPQADAVIVHHREV) is determines site-specific fucosylation. 3 N-linked (GlcNAc...) asparagine glycosylation sites follow: asparagine 91, asparagine 153, and asparagine 184.

The protein belongs to the glycosyltransferase 10 family. As to quaternary structure, homodimer and monomer. Monomer (secreted form). N-glycosylated. Post-translationally, proteolytic cleavage releases a secreted glycoform of 43 kDa.

Its subcellular location is the golgi apparatus. It localises to the golgi stack membrane. The protein localises to the secreted. It carries out the reaction a beta-D-galactosyl-(1-&gt;4)-N-acetyl-beta-D-glucosaminyl derivative + GDP-beta-L-fucose = a beta-D-galactosyl-(1-&gt;4)-[alpha-L-fucosyl-(1-&gt;3)]-N-acetyl-beta-D-glucosaminyl derivative + GDP + H(+). The enzyme catalyses an N-acetyl-alpha-neuraminyl-(2-&gt;3)-beta-D-galactosyl-(1-&gt;4)-N-acetyl-beta-D-glucosaminyl derivative + GDP-beta-L-fucose = an alpha-Neu5Ac-(2-&gt;3)-beta-D-Gal-(1-&gt;4)-[alpha-L-Fuc-(1-&gt;3)]-beta-D-GlcNAc derivative + GDP + H(+). It catalyses the reaction an alpha-Neu5Ac-(2-&gt;3)-beta-D-Gal-(1-&gt;4)-beta-D-GlcNAc-(1-&gt;3)-beta-D-Gal-(1-&gt;4)-[alpha-L-Fuc-(1-&gt;3)]-beta-D-GlcNAc derivative + GDP-beta-L-fucose = an alpha-Neu5Ac-(2-&gt;3)-beta-D-Gal-(1-&gt;4)-[alpha-L-Fuc-(1-&gt;3)]-beta-D-GlcNAc-(1-&gt;3)-beta-D-Gal-(1-&gt;4)-[alpha-L-Fuc-(1-&gt;3)]-beta-D-GlcNAc derivative + GDP + H(+). The catalysed reaction is a neolactoside nLc6Cer + GDP-beta-L-fucose = beta-D-Gal-(1-&gt;4)-[alpha-L-Fuc-(1-&gt;3)]-beta-D-GlcNAc-(1-&gt;3)-beta-D-Gal-(1-&gt;4)-beta-D-GlcNAc-(1-&gt;3)-beta-D-Gal-(1-&gt;4)-beta-D-Glc-(1&lt;-&gt;1')-Cer + GDP + H(+). It carries out the reaction a neolactoside nLc6Cer + GDP-beta-L-fucose = beta-D-galactosyl-(1-&gt;4)-N-acetyl-beta-D-glucosaminyl-(1-&gt;3)-beta-D-galactosyl-(1-&gt;4)-[alpha-L-fucosyl-(1-&gt;3)]-N-acetyl-beta-D-glucosaminyl-(1-&gt;3)-beta-D-galactosyl-(1-&gt;4)-beta-D-glucosyl-(1&lt;-&gt;1')-ceramide + GDP + H(+). The enzyme catalyses a neolactoside VI(3)-alpha-NeuNAc-nLc6Cer + GDP-beta-L-fucose = a neolactoside VI(3)-alpha-NeuAc,V(3)-alphaFuc-nLc6Cer + GDP + H(+). It catalyses the reaction beta-D-galactosyl-(1-&gt;4)-N-acetyl-D-glucosamine + GDP-beta-L-fucose = beta-D-galactosyl-(1-&gt;4)-[alpha-L-fucosyl-(1-&gt;3)]-N-acetyl-D-glucosamine + GDP + H(+). The catalysed reaction is N-acetyl-alpha-neuraminosyl-(2-&gt;3)-beta-D-galactosyl-(1-&gt;4)-N-acetyl-beta-D-glucosamine + GDP-beta-L-fucose = N-acetyl-alpha-neuraminosyl-(2-&gt;3)-beta-D-galactosyl-(1-&gt;4)-[alpha-L-fucosyl-(1-&gt;3)]-N-acetyl-beta-D-glucosamine + GDP + H(+). It carries out the reaction lactose + GDP-beta-L-fucose = beta-D-galactosyl-(1-&gt;4)-[alpha-L-fucosyl-(1-&gt;3)]-D-glucose + GDP + H(+). The enzyme catalyses alpha-L-Fuc-(1-&gt;2)-beta-D-Gal-(1-&gt;4)-D-Glc + GDP-beta-L-fucose = alpha-L-Fuc-(1-&gt;2)-beta-D-Gal-(1-&gt;4)-[alpha-L-Fuc-(1-&gt;3)]-D-Glc + GDP + H(+). It catalyses the reaction a beta-D-galactosyl-(1-&gt;4)-N-acetyl-beta-D-6-sulfooxy-glucosaminyl derivative + GDP-beta-L-fucose = a beta-D-galactosyl-(1-&gt;4)-[alpha-L-fucosyl-(1-&gt;3)]-N-acetyl-beta-D-6-sulfooxy-glucosaminyl derivative + GDP + H(+). Its pathway is protein modification; protein glycosylation. Its function is as follows. Catalyzes the transfer of L-fucose, from a guanosine diphosphate-beta-L-fucose, to the N-acetyl glucosamine (GlcNAc) of a distal alpha2,3 sialylated lactosamine unit of a glycoprotein- or glycolipid-linked sialopolylactosamines chain or of a distal or internal lactosamine unit of a neutral glycoprotein- or glycolipid-linked polylactosamines chain through an alpha-1,3 glycosidic linkage and participates in surface expression of the sialyl Lewis X (sLe(x)), Lewis X (Le(x)) and non sialylated VIM2 determinants. Moreover transfers fucose to H-type 2 (Fucalpha1-2Galbeta1-4GlcNAc) chain acceptor substrates and participates in difucosylated sialyl Lewis x determinants. Also fucosylates a polylactosamine substrate having a 6 sulfate modification at the GlcNAc moiety and gives rise to sialyl and non-sialyl 6-sulfo lewis X. Does not have activity towards type 1 ((Galbeta1-3GlcNAc)) and H-type 1 chain (Fucalpha1-2Galbeta1-3GlcNAc) acceptors substrates. This chain is 4-galactosyl-N-acetylglucosaminide 3-alpha-L-fucosyltransferase FUT6, found in Pongo pygmaeus (Bornean orangutan).